The sequence spans 364 residues: MSGNSIGQNFVVTTFGESHGVALGCIIDGCPPGLELNEADMQHDLDRRRPGTSRYTTARREPDEVRVLSGIFEGKTTGTSIGLMIENTDQRSKDYSNIKDLFRPGHADYTYQQKYGLRDYRGGGRSSARETAMRVAAGAVAKKYLKQVHGIEINGFLSQLGPIKAEALDFSQIEQNAFFFPDPSKLDELDEYMRDLKKSGDSVGAKVSVVATGVPVGLGEPVFDRLDADIAHALMGINAVKGVEIGDGFEVVTQKGSEHRDLMSPEGFASNHAGGILGGISSGQPIVAHIAMKPTSSISIPGESITAQGEIAEVVTKGRHDPCVGIRAVPIAEAMLAIVLMDHLLRHRAQNMDVNSQTPTIGMR.

NADP(+) contacts are provided by arginine 48 and arginine 54. FMN-binding positions include 125-127 (RSS), 238-239 (NA), glycine 278, 293-297 (KPTSS), and arginine 319.

Belongs to the chorismate synthase family. In terms of assembly, homotetramer. FMNH2 serves as cofactor.

The catalysed reaction is 5-O-(1-carboxyvinyl)-3-phosphoshikimate = chorismate + phosphate. The protein operates within metabolic intermediate biosynthesis; chorismate biosynthesis; chorismate from D-erythrose 4-phosphate and phosphoenolpyruvate: step 7/7. Catalyzes the anti-1,4-elimination of the C-3 phosphate and the C-6 proR hydrogen from 5-enolpyruvylshikimate-3-phosphate (EPSP) to yield chorismate, which is the branch point compound that serves as the starting substrate for the three terminal pathways of aromatic amino acid biosynthesis. This reaction introduces a second double bond into the aromatic ring system. This is Chorismate synthase from Shewanella woodyi (strain ATCC 51908 / MS32).